The sequence spans 303 residues: Acetaldehyde dehydrogenase (303 aa).

Cys-130 serves as the catalytic Acyl-thioester intermediate. NAD(+) is bound by residues 161 to 169 and Asn-272; that span reads SVGPGTRKN.

The protein belongs to the acetaldehyde dehydrogenase family.

The catalysed reaction is acetaldehyde + NAD(+) + CoA = acetyl-CoA + NADH + H(+). The polypeptide is Acetaldehyde dehydrogenase (Verminephrobacter eiseniae (strain EF01-2)).